Here is a 311-residue protein sequence, read N- to C-terminus: Putative S-adenosyl-L-methionine-dependent methyltransferase MUL_4761 (311 aa).

S-adenosyl-L-methionine-binding positions include Asp-132 and 161–162 (DL).

This sequence belongs to the UPF0677 family.

Functionally, exhibits S-adenosyl-L-methionine-dependent methyltransferase activity. The chain is Putative S-adenosyl-L-methionine-dependent methyltransferase MUL_4761 from Mycobacterium ulcerans (strain Agy99).